Here is a 290-residue protein sequence, read N- to C-terminus: 4-diphosphocytidyl-2-C-methyl-D-erythritol kinase (290 aa).

Lys10 is a catalytic residue. ATP is bound at residue 95–105; that stretch reads PVAAGLAGGSS. The active site involves Asp137.

The protein belongs to the GHMP kinase family. IspE subfamily.

It catalyses the reaction 4-CDP-2-C-methyl-D-erythritol + ATP = 4-CDP-2-C-methyl-D-erythritol 2-phosphate + ADP + H(+). It functions in the pathway isoprenoid biosynthesis; isopentenyl diphosphate biosynthesis via DXP pathway; isopentenyl diphosphate from 1-deoxy-D-xylulose 5-phosphate: step 3/6. Its function is as follows. Catalyzes the phosphorylation of the position 2 hydroxy group of 4-diphosphocytidyl-2C-methyl-D-erythritol. This Geobacillus thermodenitrificans (strain NG80-2) protein is 4-diphosphocytidyl-2-C-methyl-D-erythritol kinase.